Consider the following 257-residue polypeptide: L-aspartate dehydrogenase (257 aa).

Residues Ala124 and Asn180 each contribute to the NAD(+) site. The active site involves His208.

The protein belongs to the L-aspartate dehydrogenase family.

It catalyses the reaction L-aspartate + NADP(+) + H2O = oxaloacetate + NH4(+) + NADPH + H(+). The enzyme catalyses L-aspartate + NAD(+) + H2O = oxaloacetate + NH4(+) + NADH + H(+). The protein operates within cofactor biosynthesis; NAD(+) biosynthesis; iminoaspartate from L-aspartate (dehydrogenase route): step 1/1. Functionally, specifically catalyzes the NAD or NADP-dependent dehydrogenation of L-aspartate to iminoaspartate. In Methanothermobacter thermautotrophicus (strain ATCC 29096 / DSM 1053 / JCM 10044 / NBRC 100330 / Delta H) (Methanobacterium thermoautotrophicum), this protein is L-aspartate dehydrogenase.